The sequence spans 360 residues: DNA primase large subunit PriL (360 aa).

[4Fe-4S] cluster is bound by residues C237, C309, C318, and C325. Residues 340–360 form a disordered region; sequence DDGDDDDLADWRDREDDDSPD.

Belongs to the eukaryotic-type primase large subunit family. Heterodimer of a small subunit (PriS) and a large subunit (PriL). Requires [4Fe-4S] cluster as cofactor.

In terms of biological role, regulatory subunit of DNA primase, an RNA polymerase that catalyzes the synthesis of short RNA molecules used as primers for DNA polymerase during DNA replication. Stabilizes and modulates the activity of the small subunit, increasing the rate of DNA synthesis, and conferring RNA synthesis capability. The DNA polymerase activity may enable DNA primase to also catalyze primer extension after primer synthesis. May also play a role in DNA repair. This is DNA primase large subunit PriL from Halobacterium salinarum (strain ATCC 29341 / DSM 671 / R1).